A 481-amino-acid polypeptide reads, in one-letter code: Protein nucleotidyltransferase YdiU (481 aa).

ATP contacts are provided by Gly85, Gly87, Arg88, Lys108, Asp120, Gly121, Arg172, and Arg179. The Proton acceptor role is filled by Asp248. Mg(2+) is bound by residues Asn249 and Asp258. Asp258 is a binding site for ATP.

It belongs to the SELO family. Requires Mg(2+) as cofactor. The cofactor is Mn(2+).

It catalyses the reaction L-seryl-[protein] + ATP = 3-O-(5'-adenylyl)-L-seryl-[protein] + diphosphate. The enzyme catalyses L-threonyl-[protein] + ATP = 3-O-(5'-adenylyl)-L-threonyl-[protein] + diphosphate. It carries out the reaction L-tyrosyl-[protein] + ATP = O-(5'-adenylyl)-L-tyrosyl-[protein] + diphosphate. The catalysed reaction is L-histidyl-[protein] + UTP = N(tele)-(5'-uridylyl)-L-histidyl-[protein] + diphosphate. It catalyses the reaction L-seryl-[protein] + UTP = O-(5'-uridylyl)-L-seryl-[protein] + diphosphate. The enzyme catalyses L-tyrosyl-[protein] + UTP = O-(5'-uridylyl)-L-tyrosyl-[protein] + diphosphate. In terms of biological role, nucleotidyltransferase involved in the post-translational modification of proteins. It can catalyze the addition of adenosine monophosphate (AMP) or uridine monophosphate (UMP) to a protein, resulting in modifications known as AMPylation and UMPylation. This is Protein nucleotidyltransferase YdiU from Cereibacter sphaeroides (strain KD131 / KCTC 12085) (Rhodobacter sphaeroides).